Reading from the N-terminus, the 75-residue chain is UPF0291 protein Teth39_0326 (75 aa).

Belongs to the UPF0291 family.

The protein localises to the cytoplasm. The sequence is that of UPF0291 protein Teth39_0326 from Thermoanaerobacter pseudethanolicus (strain ATCC 33223 / 39E) (Clostridium thermohydrosulfuricum).